Consider the following 280-residue polypeptide: Phosphonates import ATP-binding protein PhnC 1 (280 aa).

In terms of domain architecture, ABC transporter spans phenylalanine 3–serine 247. Position 36-43 (glycine 36–threonine 43) interacts with ATP.

This sequence belongs to the ABC transporter superfamily. Phosphonates importer (TC 3.A.1.9.1) family. The complex is composed of two ATP-binding proteins (PhnC), two transmembrane proteins (PhnE) and a solute-binding protein (PhnD).

The protein resides in the cell inner membrane. It carries out the reaction phosphonate(out) + ATP + H2O = phosphonate(in) + ADP + phosphate + H(+). Part of the ABC transporter complex PhnCDE involved in phosphonates import. Responsible for energy coupling to the transport system. This Cupriavidus necator (strain ATCC 17699 / DSM 428 / KCTC 22496 / NCIMB 10442 / H16 / Stanier 337) (Ralstonia eutropha) protein is Phosphonates import ATP-binding protein PhnC 1.